Consider the following 438-residue polypeptide: Forkhead box protein J1 (438 aa).

Positions 123 to 217 (KPPYSYATLI…MNGAMKKRRL (95 aa)) form a DNA-binding region, fork-head.

Belongs to the FOXJ1 family.

It is found in the nucleus. Its function is as follows. Key transcription factor required for motile ciliogenesis. Activates genes essential for motile cilia formation and function. This is Forkhead box protein J1 from Xenopus tropicalis (Western clawed frog).